Consider the following 323-residue polypeptide: Thymidylate synthase (323 aa).

DUMP-binding positions include arginine 21 and 172–173 (RR). Catalysis depends on cysteine 192, which acts as the Nucleophile. Residues 214–217 (RSND), asparagine 225, and 255–257 (HVY) contribute to the dUMP site. Aspartate 217 contributes to the (6R)-5,10-methylene-5,6,7,8-tetrahydrofolate binding site. (6R)-5,10-methylene-5,6,7,8-tetrahydrofolate is bound at residue alanine 322.

It belongs to the thymidylate synthase family. Bacterial-type ThyA subfamily. Homodimer.

It localises to the cytoplasm. The catalysed reaction is dUMP + (6R)-5,10-methylene-5,6,7,8-tetrahydrofolate = 7,8-dihydrofolate + dTMP. The protein operates within pyrimidine metabolism; dTTP biosynthesis. Catalyzes the reductive methylation of 2'-deoxyuridine-5'-monophosphate (dUMP) to 2'-deoxythymidine-5'-monophosphate (dTMP) while utilizing 5,10-methylenetetrahydrofolate (mTHF) as the methyl donor and reductant in the reaction, yielding dihydrofolate (DHF) as a by-product. This enzymatic reaction provides an intracellular de novo source of dTMP, an essential precursor for DNA biosynthesis. The protein is Thymidylate synthase of Bordetella parapertussis (strain 12822 / ATCC BAA-587 / NCTC 13253).